The following is a 303-amino-acid chain: Taste receptor type 2 member 13 (303 aa).

Over 1-7 the chain is Extracellular; sequence MESALPS. Residues 8-28 form a helical membrane-spanning segment; that stretch reads IFTLVIIAEFIIGNLSNGFIV. Over 29-55 the chain is Cytoplasmic; sequence LINCIDWVSKRELSSVDKLLIILAISR. A helical transmembrane segment spans residues 56 to 76; that stretch reads IGLIWEILVSWFLALHSLAIF. The Extracellular portion of the chain corresponds to 77–85; it reads VSGTGLRIM. The chain crosses the membrane as a helical span at residues 86–106; sequence IFSWIVSNHFNLWLATILSIF. The Cytoplasmic portion of the chain corresponds to 107–128; that stretch reads YLLKIASFSSPAFLYLKRRVNK. Residues 129–149 form a helical membrane-spanning segment; sequence VILMILLGTLVFLFLNLIQIN. The Extracellular portion of the chain corresponds to 150–184; that stretch reads MLIKDWLDRYERNTTWNFSMSDFETFSVSVRFTMT. Residues N162 and N166 are each glycosylated (N-linked (GlcNAc...) asparagine). A helical membrane pass occupies residues 185–205; it reads MFSLTPFTVAFISFLLLVFSL. The Cytoplasmic segment spans residues 206 to 232; that stretch reads QKHLQKMQLNYKGHRDPRTKVHTNALK. The chain crosses the membrane as a helical span at residues 233–253; sequence IVISFLLFYASFFLSILISWI. Topologically, residues 254–261 are extracellular; it reads SELYQNTV. The chain crosses the membrane as a helical span at residues 262 to 282; it reads IYMLCETIGAFYPSSHSFLLI. The Cytoplasmic portion of the chain corresponds to 283–303; that stretch reads LGNAKLRQAFLLVAAKVWAKR.

It belongs to the G-protein coupled receptor T2R family.

It is found in the membrane. Its function is as follows. Receptor that may play a role in the perception of bitterness and is gustducin-linked. May play a role in sensing the chemical composition of the gastrointestinal content. The activity of this receptor may stimulate alpha gustducin, mediate PLC-beta-2 activation and lead to the gating of TRPM5. The polypeptide is Taste receptor type 2 member 13 (TAS2R13) (Pan paniscus (Pygmy chimpanzee)).